A 611-amino-acid polypeptide reads, in one-letter code: Leukotriene A-4 hydrolase (611 aa).

Position 73 is an N6-acetyllysine (Lys73). Residues 135 to 137 (QCQ) and 267 to 272 (PYGGME) contribute to the a peptide site. His296 is a binding site for Zn(2+). Residue Glu297 is the Proton acceptor of the active site. Zn(2+)-binding residues include His300 and Glu319. At Lys337 the chain carries N6-acetyllysine. The active-site Proton donor is Tyr384. Lys414 carries the post-translational modification N6-acetyllysine. Ser416 carries the phosphoserine modification. 564-566 (RMK) serves as a coordination point for a peptide. Position 573 is an N6-acetyllysine (Lys573).

It belongs to the peptidase M1 family. As to quaternary structure, monomer. Zn(2+) serves as cofactor. Phosphorylation at Ser-416 inhibits leukotriene-A4 hydrolase activity. activity.

Its subcellular location is the cytoplasm. It carries out the reaction leukotriene A4 + H2O = leukotriene B4. The catalysed reaction is (5S,6S)-epoxy-(18R)-hydroxy-(7E,9E,11Z,14Z,16E)-eicosapentaenoate + H2O = resolvin E1. The enzyme catalyses (5S,6S)-epoxy-(18S)-hydroxy-(7E,9E,11Z,14Z,16E)-eicosapentaenoate + H2O = 18S-resolvin E1. It catalyses the reaction Release of the N-terminal residue from a tripeptide.. It functions in the pathway lipid metabolism; leukotriene B4 biosynthesis. With respect to regulation, inhibited by bestatin. The epoxide hydrolase activity is restrained by suicide inactivation that involves binding of LTA4 to Tyr-379. 4-(4-benzylphenyl)thiazol-2-amine (ARM1) selectively inhibits the epoxide hydrolase activity. In terms of biological role, bifunctional zinc metalloenzyme that comprises both epoxide hydrolase (EH) and aminopeptidase activities. Acts as an epoxide hydrolase to catalyze the conversion of LTA4 to the pro-inflammatory mediator leukotriene B4 (LTB4). Also has aminopeptidase activity, with high affinity for N-terminal arginines of various synthetic tripeptides. In addition to its pro-inflammatory EH activity, may also counteract inflammation by its aminopeptidase activity, which inactivates by cleavage another neutrophil attractant, the tripeptide Pro-Gly-Pro (PGP), a bioactive fragment of collagen generated by the action of matrix metalloproteinase-9 (MMP9) and prolylendopeptidase (PREPL). Involved also in the biosynthesis of resolvin E1 and 18S-resolvin E1 from eicosapentaenoic acid, two lipid mediators that show potent anti-inflammatory and pro-resolving actions. This Bos taurus (Bovine) protein is Leukotriene A-4 hydrolase (LTA4H).